The primary structure comprises 914 residues: Probable dipeptidyl-aminopeptidase B (914 aa).

Over residues 1–10 the composition is skewed to basic and acidic residues; it reads MATFSDHETS. Residues 1 to 63 form a disordered region; sequence MATFSDHETS…TGMDNGDRYR (63 aa). Residues 1–91 are Cytoplasmic-facing; sequence MATFSDHETS…KAATGGRARR (91 aa). Over residues 20–35 the composition is skewed to low complexity; it reads STSSASQTSSDSGLSS. The span at 45–56 shows a compositional bias: polar residues; the sequence is QPFSAPNGTTGM. The helical; Signal-anchor for type II membrane protein transmembrane segment at 92–112 threads the bilayer; it reads IFWLLVLLCFGGWLLAFVLFL. Residues 113–914 are Vacuolar-facing; the sequence is TGGRANYQSA…RFKRSLPVLV (802 aa). N-linked (GlcNAc...) asparagine glycosylation is found at Asn-348, Asn-565, and Asn-639. Residue Ser-753 is the Charge relay system of the active site. A glycan (N-linked (GlcNAc...) asparagine) is linked at Asn-807. Residues Asp-830 and His-863 each act as charge relay system in the active site.

The protein belongs to the peptidase S9B family.

It is found in the vacuole membrane. The enzyme catalyses Release of an N-terminal dipeptide, Xaa-Yaa-|-Zaa-, from a polypeptide, preferentially when Yaa is Pro, provided Zaa is neither Pro nor hydroxyproline.. Its function is as follows. Type IV dipeptidyl-peptidase which removes N-terminal dipeptides sequentially from polypeptides having unsubstituted N-termini provided that the penultimate residue is proline. The sequence is that of Probable dipeptidyl-aminopeptidase B (dapB) from Aspergillus clavatus (strain ATCC 1007 / CBS 513.65 / DSM 816 / NCTC 3887 / NRRL 1 / QM 1276 / 107).